Here is a 507-residue protein sequence, read N- to C-terminus: Arabinose import ATP-binding protein AraG (507 aa).

ABC transporter domains lie at 8–243 (LSFH…MVGR) and 255–499 (PHGE…MLRI). 40–47 (GENGAGKS) contacts ATP.

Belongs to the ABC transporter superfamily. Arabinose importer (TC 3.A.1.2.2) family. In terms of assembly, the complex is composed of two ATP-binding proteins (AraG), two transmembrane proteins (AraH) and a solute-binding protein (AraF).

The protein localises to the cell inner membrane. The enzyme catalyses L-arabinose(out) + ATP + H2O = L-arabinose(in) + ADP + phosphate + H(+). Part of the ABC transporter complex AraFGH involved in arabinose import. Responsible for energy coupling to the transport system. This chain is Arabinose import ATP-binding protein AraG, found in Pectobacterium atrosepticum (strain SCRI 1043 / ATCC BAA-672) (Erwinia carotovora subsp. atroseptica).